The sequence spans 258 residues: Shikimate dehydrogenase (NADP(+)) (258 aa).

Shikimate contacts are provided by residues 14 to 16 (SES) and Thr61. The active-site Proton acceptor is the Lys65. Residues Asn86 and Asp101 each contribute to the shikimate site. Residues 125–129 (GSGGS) and Leu211 contribute to the NADP(+) site. Tyr213 contributes to the shikimate binding site. NADP(+) is bound at residue Gly234.

This sequence belongs to the shikimate dehydrogenase family. In terms of assembly, homodimer.

It carries out the reaction shikimate + NADP(+) = 3-dehydroshikimate + NADPH + H(+). Its pathway is metabolic intermediate biosynthesis; chorismate biosynthesis; chorismate from D-erythrose 4-phosphate and phosphoenolpyruvate: step 4/7. In terms of biological role, involved in the biosynthesis of the chorismate, which leads to the biosynthesis of aromatic amino acids. Catalyzes the reversible NADPH linked reduction of 3-dehydroshikimate (DHSA) to yield shikimate (SA). The chain is Shikimate dehydrogenase (NADP(+)) from Clostridium botulinum (strain ATCC 19397 / Type A).